The chain runs to 429 residues: Phosphoglucosamine mutase (429 aa).

Serine 96 (phosphoserine intermediate) is an active-site residue. Serine 96, aspartate 230, aspartate 232, and aspartate 234 together coordinate Mg(2+). At serine 96 the chain carries Phosphoserine.

It belongs to the phosphohexose mutase family. It depends on Mg(2+) as a cofactor. In terms of processing, activated by phosphorylation.

The catalysed reaction is alpha-D-glucosamine 1-phosphate = D-glucosamine 6-phosphate. Its function is as follows. Catalyzes the conversion of glucosamine-6-phosphate to glucosamine-1-phosphate. The sequence is that of Phosphoglucosamine mutase from Thermotoga petrophila (strain ATCC BAA-488 / DSM 13995 / JCM 10881 / RKU-1).